The sequence spans 251 residues: Hydroxyacylglutathione hydrolase (251 aa).

Zn(2+) is bound by residues His-53, His-55, Asp-57, His-58, His-110, Asp-127, and His-165.

This sequence belongs to the metallo-beta-lactamase superfamily. Glyoxalase II family. As to quaternary structure, monomer. Requires Zn(2+) as cofactor.

The catalysed reaction is an S-(2-hydroxyacyl)glutathione + H2O = a 2-hydroxy carboxylate + glutathione + H(+). The protein operates within secondary metabolite metabolism; methylglyoxal degradation; (R)-lactate from methylglyoxal: step 2/2. Its function is as follows. Thiolesterase that catalyzes the hydrolysis of S-D-lactoyl-glutathione to form glutathione and D-lactic acid. This is Hydroxyacylglutathione hydrolase from Buchnera aphidicola subsp. Acyrthosiphon pisum (strain APS) (Acyrthosiphon pisum symbiotic bacterium).